We begin with the raw amino-acid sequence, 102 residues long: EPIDERMAL PATTERNING FACTOR-like protein 9 (102 aa).

An N-terminal signal peptide occupies residues 1–31 (MKHEMMNIKPRCITIFFLLFALLLGNYVVQA). Cystine bridges form between cysteine 65–cysteine 98, cysteine 70–cysteine 77, and cysteine 73–cysteine 100.

This sequence belongs to the plant cysteine rich small secretory peptide family. Epidermal patterning factor subfamily. As to quaternary structure, interacts with ERECTA and TMM. Expressed in immature organs, including leaves, stems and flower buds, but not in roots, shoot apical meristem and petals. Detected in the mesophyll tissues but not in the epidermal tissues where stomata develop.

The protein localises to the secreted. The protein resides in the extracellular space. Its subcellular location is the apoplast. Positively regulates stomatal density and patterning. Acts by competing with EPF2 (AC Q8LC53) for the same receptors, ERECTA (AC Q42371) and TMM (AC Q9SSD1). Not cleaved by the protease CRSP (AC Q9LNU1). The polypeptide is EPIDERMAL PATTERNING FACTOR-like protein 9 (Arabidopsis thaliana (Mouse-ear cress)).